Consider the following 354-residue polypeptide: Probable butyrate kinase (354 aa).

It belongs to the acetokinase family.

It is found in the cytoplasm. It carries out the reaction butanoate + ATP = butanoyl phosphate + ADP. In Phocaeicola vulgatus (strain ATCC 8482 / DSM 1447 / JCM 5826 / CCUG 4940 / NBRC 14291 / NCTC 11154) (Bacteroides vulgatus), this protein is Probable butyrate kinase.